The chain runs to 448 residues: MSTMTPAEIVSELDKHIIGQGRAKKAVAVALRNRWRRQQVEDPLRQEITPKNILMIGPTGVGKTEIARRLAKLADAPFIKIEATKFTEVGYVGRDVDSIVRDLIEISVKQTRETEMRKVRTKAEDQAEDRILDILLPSARPVGFGASSSAADTVDESSTTRQTFRKRLREGLLDDKEIELDVEQPQVGMDIMGPPGMEDMTEQIRSMFANIGGGKKTRRKLKVKEALKVLTDEEAGKMLNDEEVKTKAVQNVEQNGIVFLDEIDKIASRNEAGGGEVSRQGVQRDLLPLVEGTTINTKYGMVKTDHILFIASGAFHLAKPSDLIPELQGRFPIRVELDSLSVNDFESILVSTDASLVKQYQALLATEDVHLEFADDGIRRLAEIAYSVNEKTENIGARRLYTVIEKLLEEVSFAAGNHSGRTVQIDAAYVDRALNEVAEDEDLSRYVL.

Residues Ile18, 60 to 65 (GVGKTE), Asp261, Glu326, and Arg398 contribute to the ATP site.

This sequence belongs to the ClpX chaperone family. HslU subfamily. As to quaternary structure, a double ring-shaped homohexamer of HslV is capped on each side by a ring-shaped HslU homohexamer. The assembly of the HslU/HslV complex is dependent on binding of ATP.

The protein resides in the cytoplasm. Its function is as follows. ATPase subunit of a proteasome-like degradation complex; this subunit has chaperone activity. The binding of ATP and its subsequent hydrolysis by HslU are essential for unfolding of protein substrates subsequently hydrolyzed by HslV. HslU recognizes the N-terminal part of its protein substrates and unfolds these before they are guided to HslV for hydrolysis. The sequence is that of ATP-dependent protease ATPase subunit HslU from Paraburkholderia phytofirmans (strain DSM 17436 / LMG 22146 / PsJN) (Burkholderia phytofirmans).